We begin with the raw amino-acid sequence, 380 residues long: Apolipoprotein A-IV (380 aa).

A signal peptide spans Met-1 to Ala-20. Repeat copies occupy residues Asp-33 to Leu-54, Thr-60 to Val-81, Pro-82 to Arg-103, Pro-115 to Gly-136, Pro-137 to Thr-158, Pro-159 to Ala-180, Pro-181 to Thr-202, Pro-203 to Ala-224, Pro-225 to Lys-246, Lys-247 to Val-268, Pro-269 to Gln-286, Lys-287 to Gly-308, and Pro-309 to Gly-330. The segment at Asp-33–Gly-330 is 13 X 22 AA approximate tandem repeats. The tract at residues Lys-361–Gly-380 is disordered.

The protein belongs to the apolipoprotein A1/A4/E family. As to quaternary structure, homodimer. In terms of tissue distribution, secreted in plasma.

The protein resides in the secreted. Its function is as follows. May have a role in chylomicrons and VLDL secretion and catabolism. Required for efficient activation of lipoprotein lipase by ApoC-II; potent activator of LCAT. Apoa-IV is a major component of HDL and chylomicrons. The chain is Apolipoprotein A-IV (APOA4) from Bos taurus (Bovine).